We begin with the raw amino-acid sequence, 327 residues long: Deoxynucleotidyltransferase terminal-interacting protein 1 (327 aa).

A compositionally biased stretch (gly residues) spans 1-11 (MGATGDTGGPR). Disordered regions lie at residues 1–34 (MGATGDTGGPRPGTESRRPGNVGNAGAAGQPVLT) and 146–172 (KRGRQAEEESHREAPFPKRGKVGLPGH). The tract at residues 55-146 (MTTSFTDPAI…RLAHELPGIK (92 aa)) is important for dimerization. The span at 146–161 (KRGRQAEEESHREAPF) shows a compositional bias: basic and acidic residues. The a.T hook DNA-binding region spans 157 to 171 (REAPFPKRGKVGLPG). The Nuclear localization signal signature appears at 162-168 (PKRGKVG). The important for DNA and nucleosome binding stretch occupies residues 195-314 (REGPKWDPAR…MRKYMETLRT (120 aa)). Residues 214–235 (GSRANKALGMGGTRGRIYIKHP) constitute a DNA-binding region (H-T-H motif).

Monomer and homodimer. A minor proportion may form homotrimers. Interacts with ZNF541. Interacts with the terminal deoxynucleotidyltransferase DNTT. Interacts with TRERF1. Identified in a histone deacetylase complex that contains DNTTIP1, HDAC1 and MIDEAS; this complex assembles into a tetramer that contains four copies of each protein chain. Component of a histone deacetylase complex containing DNTTIP1, ZNF541, HDAC1 and HDAC2. Identified in a complex with KCTD19, HDAC1, HDAC2 and ZNF541. In terms of tissue distribution, expressed in thymus, bone marrow and spleen.

It is found in the nucleus. In terms of biological role, increases DNTT terminal deoxynucleotidyltransferase activity (in vitro). Also acts as a transcriptional regulator, binding to the consensus sequence 5'-GNTGCATG-3' following an AT-tract. Associates with RAB20 promoter and positively regulates its transcription. Binds DNA and nucleosomes; may recruit HDAC1 complexes to nucleosomes or naked DNA. The polypeptide is Deoxynucleotidyltransferase terminal-interacting protein 1 (Dnttip1) (Rattus norvegicus (Rat)).